The following is a 500-amino-acid chain: Apolipoprotein N-acyltransferase (500 aa).

6 consecutive transmembrane segments (helical) span residues 5–25, 38–58, 74–94, 111–131, 145–165, and 185–205; these read VAPFAAWFLAWIALAPLWIFV, LLLLGLTWGIGYHGVALFWIT, LAITIFCWSFISFYGGLFGAI, ILIGTAMWCVLESLWSAGPLW, AILHLGQISGPNLVTAAIVSV, and LAIATGLLITLHLIGFGLYTA. The region spanning 215–462 is the CN hydrolase domain; sequence LKVGIVQGNI…ETIYRRQTQN (248 aa). Residue Glu261 is the Proton acceptor of the active site. Lys318 is a catalytic residue. Cys369 functions as the Nucleophile in the catalytic mechanism. Residues 469-489 form a helical membrane-spanning segment; the sequence is DWFTPLLVGLSFLGWSLNIFW.

This sequence belongs to the CN hydrolase family. Apolipoprotein N-acyltransferase subfamily.

It localises to the cell inner membrane. It carries out the reaction N-terminal S-1,2-diacyl-sn-glyceryl-L-cysteinyl-[lipoprotein] + a glycerophospholipid = N-acyl-S-1,2-diacyl-sn-glyceryl-L-cysteinyl-[lipoprotein] + a 2-acyl-sn-glycero-3-phospholipid + H(+). It functions in the pathway protein modification; lipoprotein biosynthesis (N-acyl transfer). Its function is as follows. Catalyzes the phospholipid dependent N-acylation of the N-terminal cysteine of apolipoprotein, the last step in lipoprotein maturation. In Nostoc sp. (strain PCC 7120 / SAG 25.82 / UTEX 2576), this protein is Apolipoprotein N-acyltransferase.